The sequence spans 156 residues: Arginine repressor (156 aa).

The protein belongs to the ArgR family.

The protein localises to the cytoplasm. It participates in amino-acid biosynthesis; L-arginine biosynthesis [regulation]. Its function is as follows. Regulates arginine biosynthesis genes. The polypeptide is Arginine repressor (Yersinia enterocolitica serotype O:8 / biotype 1B (strain NCTC 13174 / 8081)).